We begin with the raw amino-acid sequence, 556 residues long: 2-succinyl-5-enolpyruvyl-6-hydroxy-3-cyclohexene-1-carboxylate synthase (556 aa).

It belongs to the TPP enzyme family. MenD subfamily. As to quaternary structure, homodimer. Mg(2+) is required as a cofactor. Mn(2+) serves as cofactor. The cofactor is thiamine diphosphate.

The enzyme catalyses isochorismate + 2-oxoglutarate + H(+) = 5-enolpyruvoyl-6-hydroxy-2-succinyl-cyclohex-3-ene-1-carboxylate + CO2. Its pathway is quinol/quinone metabolism; 1,4-dihydroxy-2-naphthoate biosynthesis; 1,4-dihydroxy-2-naphthoate from chorismate: step 2/7. It participates in quinol/quinone metabolism; menaquinone biosynthesis. Functionally, catalyzes the thiamine diphosphate-dependent decarboxylation of 2-oxoglutarate and the subsequent addition of the resulting succinic semialdehyde-thiamine pyrophosphate anion to isochorismate to yield 2-succinyl-5-enolpyruvyl-6-hydroxy-3-cyclohexene-1-carboxylate (SEPHCHC). This Salmonella heidelberg (strain SL476) protein is 2-succinyl-5-enolpyruvyl-6-hydroxy-3-cyclohexene-1-carboxylate synthase.